The sequence spans 319 residues: Beta-ketoacyl-[acyl-carrier-protein] synthase III (319 aa).

Residues Cys113 and His246 contribute to the active site. Residues 247 to 251 (QANIR) form an ACP-binding region. Asn276 is a catalytic residue.

The protein belongs to the thiolase-like superfamily. FabH family. As to quaternary structure, homodimer.

Its subcellular location is the cytoplasm. The enzyme catalyses malonyl-[ACP] + acetyl-CoA + H(+) = 3-oxobutanoyl-[ACP] + CO2 + CoA. Its pathway is lipid metabolism; fatty acid biosynthesis. In terms of biological role, catalyzes the condensation reaction of fatty acid synthesis by the addition to an acyl acceptor of two carbons from malonyl-ACP. Catalyzes the first condensation reaction which initiates fatty acid synthesis and may therefore play a role in governing the total rate of fatty acid production. Possesses both acetoacetyl-ACP synthase and acetyl transacylase activities. Its substrate specificity determines the biosynthesis of branched-chain and/or straight-chain of fatty acids. This Ehrlichia ruminantium (strain Gardel) protein is Beta-ketoacyl-[acyl-carrier-protein] synthase III.